The following is a 127-amino-acid chain: Fumarate reductase subunit C (127 aa).

Transmembrane regions (helical) follow at residues 30-50 (ATVLPLILFTLFLTVGLGSLV), 67-87 (VVIAINIVALLGSLLHAHTFF), and 107-127 (IIVLAQWAAVAFISLIVLIVV).

It belongs to the FrdC family. As to quaternary structure, part of an enzyme complex containing four subunits: a flavoprotein (FrdA), an iron-sulfur protein (FrdB), and two hydrophobic anchor proteins (FrdC and FrdD).

Its subcellular location is the cell inner membrane. Its function is as follows. Anchors the catalytic components of the fumarate reductase complex to the cell membrane, binds quinones. The chain is Fumarate reductase subunit C from Vibrio vulnificus (strain CMCP6).